The following is a 260-amino-acid chain: 3'-5' ssDNA/RNA exonuclease TatD (260 aa).

Glu-92, His-128, and His-153 together coordinate a divalent metal cation.

It belongs to the metallo-dependent hydrolases superfamily. TatD-type hydrolase family. TatD subfamily. Monomer. The cofactor is Mg(2+).

The protein localises to the cytoplasm. In terms of biological role, 3'-5' exonuclease that prefers single-stranded DNA and RNA. May play a role in the H(2)O(2)-induced DNA damage repair. The polypeptide is 3'-5' ssDNA/RNA exonuclease TatD (Pantoea vagans (strain C9-1) (Pantoea agglomerans (strain C9-1))).